Consider the following 795-residue polypeptide: Phenylalanine--tRNA ligase beta subunit (795 aa).

The tRNA-binding domain occupies 39–148; it reads AGTFNGVKVG…IDAPIGMDFR (110 aa). Residues 401–476 form the B5 domain; sequence PKPNKVALRR…RIYGYDNIPN (76 aa). The Mg(2+) site is built by Asp454, Asp460, Glu463, and Glu464. The region spanning 701–794 is the FDX-ACB domain; that stretch reads SKFPANRRDI…VSEKFGASLR (94 aa).

The protein belongs to the phenylalanyl-tRNA synthetase beta subunit family. Type 1 subfamily. In terms of assembly, tetramer of two alpha and two beta subunits. The cofactor is Mg(2+).

The protein resides in the cytoplasm. It catalyses the reaction tRNA(Phe) + L-phenylalanine + ATP = L-phenylalanyl-tRNA(Phe) + AMP + diphosphate + H(+). This is Phenylalanine--tRNA ligase beta subunit from Vibrio vulnificus (strain CMCP6).